Here is a 179-residue protein sequence, read N- to C-terminus: Bifunctional protein PyrR (179 aa).

The PRPP-binding motif lies at 99 to 111 (VILVDDVLYTGRT).

It belongs to the purine/pyrimidine phosphoribosyltransferase family. PyrR subfamily. In terms of assembly, homodimer and homohexamer; in equilibrium.

It carries out the reaction UMP + diphosphate = 5-phospho-alpha-D-ribose 1-diphosphate + uracil. Functionally, regulates transcriptional attenuation of the pyrimidine nucleotide (pyr) operon by binding in a uridine-dependent manner to specific sites on pyr mRNA. This disrupts an antiterminator hairpin in the RNA and favors formation of a downstream transcription terminator, leading to a reduced expression of downstream genes. Also displays a weak uracil phosphoribosyltransferase activity which is not physiologically significant. The protein is Bifunctional protein PyrR of Brevibacillus brevis (strain 47 / JCM 6285 / NBRC 100599).